The chain runs to 321 residues: Olfactory receptor 51G1 (321 aa).

The Extracellular segment spans residues 1 to 27; sequence MTILLNSSLQRATFFLTGFQGLEGLHG. N6 carries N-linked (GlcNAc...) asparagine glycosylation. Residues 28 to 48 traverse the membrane as a helical segment; sequence WISIPFCFIYLTVILGNLTIL. The Cytoplasmic segment spans residues 49–56; the sequence is HVICTDAT. The helical transmembrane segment at 57 to 77 threads the bilayer; sequence LHGPMYYFLGMLAVTDLGLCL. The Extracellular portion of the chain corresponds to 78 to 101; sequence STLPTVLGIFWFDTREIGIPACFT. C99 and C191 are joined by a disulfide. A helical transmembrane segment spans residues 102-122; it reads QLFFIHTLSSMESSVLLSMSI. At 123–141 the chain is on the cytoplasmic side; sequence DRYVAVCNPLHDSTVLTPA. The helical transmembrane segment at 142-162 threads the bilayer; that stretch reads CIVKMGLSSVLRSALLILPLP. Residues 163–198 are Extracellular-facing; the sequence is FLLKRFQYCHSHVLAHAYCLHLEIMKLACSSIIVNH. The helical transmembrane segment at 199-219 threads the bilayer; the sequence is IYGLFVVACTVGVDSLLIFLS. Topologically, residues 220-239 are cytoplasmic; sequence YALILRTVLSIASHQERLRA. A helical transmembrane segment spans residues 240–260; the sequence is LNTCVSHICAVLLFYIPMIGL. The Extracellular segment spans residues 261–275; that stretch reads SLVHRFGEHLPRVVH. Residues 276 to 296 form a helical membrane-spanning segment; that stretch reads LFMSYVYLLVPPLMNPIIYSI. At 297 to 321 the chain is on the cytoplasmic side; that stretch reads KTKQIRQRIIKKFQFIKSLRCFWKD.

The protein belongs to the G-protein coupled receptor 1 family.

The protein localises to the cell membrane. Its function is as follows. Odorant receptor. The sequence is that of Olfactory receptor 51G1 (OR51G1) from Homo sapiens (Human).